Here is a 199-residue protein sequence, read N- to C-terminus: NAD(P)H dehydrogenase (quinone) (199 aa).

The 187-residue stretch at 4-190 (VLVLYHSMYG…AIARFQGKHV (187 aa)) folds into the Flavodoxin-like domain. FMN contacts are provided by residues 10-15 (SMYGHI) and 79-81 (TRF). Tyrosine 12 is an NAD(+) binding site. Substrate is bound at residue tryptophan 99. An FMN-binding site is contributed by histidine 134.

Belongs to the WrbA family. Requires FMN as cofactor.

The catalysed reaction is a quinone + NADH + H(+) = a quinol + NAD(+). The enzyme catalyses a quinone + NADPH + H(+) = a quinol + NADP(+). The polypeptide is NAD(P)H dehydrogenase (quinone) (Tolumonas auensis (strain DSM 9187 / NBRC 110442 / TA 4)).